Here is an 868-residue protein sequence, read N- to C-terminus: Leucine--tRNA ligase (868 aa).

The 'HIGH' region signature appears at 42 to 52; that stretch reads PYPSGKLHMGH. The short motif at 627–631 is the 'KMSKS' region element; it reads KMSKS. ATP is bound at residue Lys-630.

It belongs to the class-I aminoacyl-tRNA synthetase family.

The protein resides in the cytoplasm. The catalysed reaction is tRNA(Leu) + L-leucine + ATP = L-leucyl-tRNA(Leu) + AMP + diphosphate. This is Leucine--tRNA ligase from Pseudomonas entomophila (strain L48).